A 408-amino-acid polypeptide reads, in one-letter code: Imidazolonepropionase (408 aa).

Fe(3+) is bound by residues H73 and H75. Residues H73 and H75 each coordinate Zn(2+). 4-imidazolone-5-propanoate is bound by residues R82, Y145, and H178. Y145 is an N-formimidoyl-L-glutamate binding site. H243 provides a ligand contact to Fe(3+). H243 provides a ligand contact to Zn(2+). Residue Q246 participates in 4-imidazolone-5-propanoate binding. D318 is a binding site for Fe(3+). A Zn(2+)-binding site is contributed by D318. Residues N320 and G322 each contribute to the N-formimidoyl-L-glutamate site. Residue S323 coordinates 4-imidazolone-5-propanoate.

This sequence belongs to the metallo-dependent hydrolases superfamily. HutI family. Requires Zn(2+) as cofactor. It depends on Fe(3+) as a cofactor.

The protein resides in the cytoplasm. The enzyme catalyses 4-imidazolone-5-propanoate + H2O = N-formimidoyl-L-glutamate. Its pathway is amino-acid degradation; L-histidine degradation into L-glutamate; N-formimidoyl-L-glutamate from L-histidine: step 3/3. Catalyzes the hydrolytic cleavage of the carbon-nitrogen bond in imidazolone-5-propanoate to yield N-formimidoyl-L-glutamate. It is the third step in the universal histidine degradation pathway. This is Imidazolonepropionase from Shewanella piezotolerans (strain WP3 / JCM 13877).